The sequence spans 295 residues: Septu protein PtuB (295 aa).

Functionally, component of antiviral defense system Septu type II, composed of PtuA and PtuB. Expression of Septu type II in B.subtilis (strain BEST7003) confers resistance to phages SBSphiC and SpBeta. May be a nuclease. The protein is Septu protein PtuB of Bacillus mycoides (strain KBAB4) (Bacillus weihenstephanensis).